The primary structure comprises 471 residues: Heparan-sulfate 6-O-sulfotransferase 3 (471 aa).

The Cytoplasmic portion of the chain corresponds to 1-4; the sequence is MDER. The chain crosses the membrane as a helical; Signal-anchor for type II membrane protein span at residues 5-27; it reads FNKWLLTPVLTLLFVVIMYQYVS. Over 28 to 471 the chain is Lumenal; the sequence is PSCTSSCTNF…EDYNSQVVRW (444 aa). The interval 39–122 is disordered; it reads EQPRAGEAGP…EAPENGSLPR (84 aa). Over residues 41–62 the composition is skewed to low complexity; it reads PRAGEAGPPAVPGPARRAQAPP. Residues 70–81 are compositionally biased toward pro residues; it reads QLPPPPRGPPEG. The segment covering 88–114 has biased composition (acidic residues); it reads PEEEDEEPGDPREGEEEEEEDEPDPEA. N-linked (GlcNAc...) asparagine glycans are attached at residues asparagine 117 and asparagine 128. 152 to 160 is a 3'-phosphoadenylyl sulfate binding site; the sequence is HIQKTGGTT. Residues 182–183, arginine 199, tryptophan 204, and histidine 209 contribute to the substrate site; that span reads KK. Histidine 209 serves as the catalytic Proton acceptor. The N-linked (GlcNAc...) asparagine glycan is linked to asparagine 231. 2 residues coordinate 3'-phosphoadenylyl sulfate: arginine 245 and serine 253. Substrate is bound by residues histidine 257 and tryptophan 264. 2 N-linked (GlcNAc...) asparagine glycosylation sites follow: asparagine 324 and asparagine 329. 377 to 379 contributes to the 3'-phosphoadenylyl sulfate binding site; sequence TQF. Asparagine 380 carries N-linked (GlcNAc...) asparagine glycosylation. 383 to 384 is a 3'-phosphoadenylyl sulfate binding site; it reads RA. Residues 422 to 471 form a disordered region; it reads TKQLEHQRDRQKRREERRLQREHRDHQWPKEDGAAEGTVTEDYNSQVVRW. Basic and acidic residues predominate over residues 423 to 454; it reads KQLEHQRDRQKRREERRLQREHRDHQWPKEDG. The span at 462 to 471 shows a compositional bias: polar residues; the sequence is EDYNSQVVRW.

The protein belongs to the sulfotransferase 6 family.

It is found in the membrane. It carries out the reaction alpha-D-glucosaminyl-[heparan sulfate](n) + 3'-phosphoadenylyl sulfate = 6-sulfo-alpha-D-glucosaminyl-[heparan sulfate](n) + adenosine 3',5'-bisphosphate + H(+). 6-O-sulfation enzyme which catalyzes the transfer of sulfate from 3'-phosphoadenosine 5'-phosphosulfate (PAPS) to position 6 of the N-sulfoglucosamine residue (GlcNS) of heparan sulfate. The chain is Heparan-sulfate 6-O-sulfotransferase 3 (HS6ST3) from Homo sapiens (Human).